A 312-amino-acid chain; its full sequence is Malate dehydrogenase (312 aa).

NAD(+)-binding positions include 7-13 (GAAGGIG) and D34. Substrate contacts are provided by R81 and R87. Residues N94 and 117-119 (ITN) each bind NAD(+). Substrate is bound by residues N119 and R153. H177 functions as the Proton acceptor in the catalytic mechanism. M227 contacts NAD(+).

It belongs to the LDH/MDH superfamily. MDH type 1 family. Homodimer.

The catalysed reaction is (S)-malate + NAD(+) = oxaloacetate + NADH + H(+). Catalyzes the reversible oxidation of malate to oxaloacetate. This Salmonella dublin (strain CT_02021853) protein is Malate dehydrogenase.